The primary structure comprises 485 residues: AP2-like ethylene-responsive transcription factor TOE2 (485 aa).

A compositionally biased stretch (gly residues) spans 124 to 135 (GDFIGSGSGGGD). Residues 124 to 161 (GDFIGSGSGGGDASRVMQPPSQPVKKSRRGPRSKSSQY) are disordered. Positions 160 to 216 (QYRGVTFYRRTGRWESHIWDCGKQVYLGGFDTAHAAARAYDRAAVKFRGLEADINFV) form a DNA-binding region, AP2/ERF.

This sequence belongs to the AP2/ERF transcription factor family. AP2 subfamily.

It localises to the nucleus. Functionally, probably acts as a transcriptional activator. Binds to the GCC-box pathogenesis-related promoter element. May be involved in the regulation of gene expression by stress factors and by components of stress signal transduction pathways. Regulates negatively the transition to flowering time and confers flowering time delay. This is AP2-like ethylene-responsive transcription factor TOE2 (TOE2) from Arabidopsis thaliana (Mouse-ear cress).